Consider the following 511-residue polypeptide: GMP synthase [glutamine-hydrolyzing] (511 aa).

Positions 5–195 constitute a Glutamine amidotransferase type-1 domain; it reads DILVLDFGSQ…AKYACNCESV (191 aa). Cysteine 82 acts as the Nucleophile in catalysis. Catalysis depends on residues histidine 169 and glutamate 171. Positions 196 to 386 constitute a GMPS ATP-PPase domain; it reads WNMGSFAKTQ…LGLSKEVVYR (191 aa). Residue 223-229 coordinates ATP; the sequence is SGGVDSS.

As to quaternary structure, homodimer.

It catalyses the reaction XMP + L-glutamine + ATP + H2O = GMP + L-glutamate + AMP + diphosphate + 2 H(+). It functions in the pathway purine metabolism; GMP biosynthesis; GMP from XMP (L-Gln route): step 1/1. Functionally, catalyzes the synthesis of GMP from XMP. The chain is GMP synthase [glutamine-hydrolyzing] from Campylobacter jejuni (strain RM1221).